The following is a 205-amino-acid chain: NAD(P)H dehydrogenase (quinone) (205 aa).

The region spanning V3–V194 is the Flavodoxin-like domain. FMN is bound by residues S9–I14 and T82–F84. Y11 contributes to the NAD(+) binding site. W102 contributes to the substrate binding site. Position 138 (H138) interacts with FMN.

The protein belongs to the WrbA family. FMN is required as a cofactor.

The enzyme catalyses a quinone + NADH + H(+) = a quinol + NAD(+). It catalyses the reaction a quinone + NADPH + H(+) = a quinol + NADP(+). This chain is NAD(P)H dehydrogenase (quinone), found in Geotalea daltonii (strain DSM 22248 / JCM 15807 / FRC-32) (Geobacter daltonii).